The sequence spans 47 residues: PhoP/PhoQ regulator MgrB (47 aa).

Residues 6–26 (WVALVVVVLACLLLWAQVFNM) traverse the membrane as a helical segment.

This sequence belongs to the MgrB family. As to quaternary structure, may form homooligomers. Probably interacts with the periplasmic domain of PhoQ.

The protein resides in the cell inner membrane. PhoP-regulated transcription is redox-sensitive, being activated when the periplasm becomes more reducing. MgrB acts between DsbA/DsbB and PhoP/PhoQ in this pathway. Represses PhoP/PhoQ signaling, possibly by binding to the periplasmic domain of PhoQ, altering its activity and that of downstream effector PhoP. The polypeptide is PhoP/PhoQ regulator MgrB (Escherichia coli O127:H6 (strain E2348/69 / EPEC)).